A 355-amino-acid chain; its full sequence is Uroporphyrinogen decarboxylase (355 aa).

Residues 27–31 (RQAGR), Phe-46, Asp-78, Tyr-155, Ser-210, and His-328 each bind substrate.

It belongs to the uroporphyrinogen decarboxylase family. In terms of assembly, homodimer.

It is found in the cytoplasm. It carries out the reaction uroporphyrinogen III + 4 H(+) = coproporphyrinogen III + 4 CO2. The protein operates within porphyrin-containing compound metabolism; protoporphyrin-IX biosynthesis; coproporphyrinogen-III from 5-aminolevulinate: step 4/4. Catalyzes the decarboxylation of four acetate groups of uroporphyrinogen-III to yield coproporphyrinogen-III. This Pseudomonas aeruginosa (strain ATCC 15692 / DSM 22644 / CIP 104116 / JCM 14847 / LMG 12228 / 1C / PRS 101 / PAO1) protein is Uroporphyrinogen decarboxylase.